Consider the following 369-residue polypeptide: MFGFGPSYDSYKLKVQLKLAVSRIQILKNKKANIVRDEKRNVAELLRKKNEESARIRVETIIRDEYLIECFQIIEVLCELLHARINLINATTEMPLEMKESIFTLVYSSQRIQIPELEQIKNQLKAKYGKGLENEANCHCSTHVNPKIVHKLSYATPDPSIIFQTLSEIAEKFNVDWCGSDYPPPPQLIMPQPIIVQQQPQILQPPPQIIHHQQQPQILQPPPQIIQQQQQPQMPSFPIMSPPQQPTFSQIQHQQQIQQQYQQQQQSPQFPSAPPSFYNNNSGNQTPQFPTISTNNSDGYSNDKFNNGNNNYNNNNNNNNNNNNNNNHNNNNNNNNNIPPPYQPSSDTGYPDYDELTARFEALKRSNDF.

Residues 12–59 (KLKVQLKLAVSRIQILKNKKANIVRDEKRNVAELLRKKNEESARIRVE) adopt a coiled-coil conformation. Positions 224–354 (QIIQQQQQPQ…SSDTGYPDYD (131 aa)) are disordered. Composition is skewed to low complexity over residues 225–239 (IIQQ…SFPI) and 246–270 (PTFS…SPQF). The span at 277 to 305 (FYNNNSGNQTPQFPTISTNNSDGYSNDKF) shows a compositional bias: polar residues. Positions 306–337 (NNGNNNYNNNNNNNNNNNNNNNHNNNNNNNNN) are enriched in low complexity.

It belongs to the IST1 family.

The polypeptide is IST1-like protein (Dictyostelium discoideum (Social amoeba)).